The sequence spans 147 residues: Phosphoribosyl-AMP cyclohydrolase (147 aa).

Asp-97 contacts Mg(2+). A Zn(2+)-binding site is contributed by Cys-98. Residues Asp-99 and Asp-101 each coordinate Mg(2+). Positions 114 and 121 each coordinate Zn(2+).

Belongs to the PRA-CH family. In terms of assembly, homodimer. It depends on Mg(2+) as a cofactor. Requires Zn(2+) as cofactor.

It localises to the cytoplasm. The enzyme catalyses 1-(5-phospho-beta-D-ribosyl)-5'-AMP + H2O = 1-(5-phospho-beta-D-ribosyl)-5-[(5-phospho-beta-D-ribosylamino)methylideneamino]imidazole-4-carboxamide. The protein operates within amino-acid biosynthesis; L-histidine biosynthesis; L-histidine from 5-phospho-alpha-D-ribose 1-diphosphate: step 3/9. In terms of biological role, catalyzes the hydrolysis of the adenine ring of phosphoribosyl-AMP. The chain is Phosphoribosyl-AMP cyclohydrolase from Hydrogenovibrio crunogenus (strain DSM 25203 / XCL-2) (Thiomicrospira crunogena).